The chain runs to 377 residues: MLMSLTLSLQAEDGRARAATLHTAHGDVPTPTFMPVGTAATVKAMMMDSVRATGAGIVLGNTYHLMLRPGADRVAALGGLHRFMDWPGPILTDSGGFQVMSLSSLRKLDKDGVTFQSHIDGSRHRLTPESSIGIQHKLDATITMAFDECTKFPATHEEAASSMELSMRWAARCRDAFVPRDGYGLFGIVQGSVYNDLRTQSVTALGDDFHGYAVGGLAVGEGQEAMFATLDHTLPLLPRGKPRYLMGVGTPDDILGAVMRGVDMFDCVMPTRAGRTARAYTSQGVMNMRNARYADDGRPIDPACDCPACTRHSRAYLHHLFRAGEMLGPMLLTWHNLNYYQSLMRGLRSAIMEGRLEQHAVTLRAAWAAGDREKQDG.

Aspartate 93 functions as the Proton acceptor in the catalytic mechanism. Substrate contacts are provided by residues aspartate 93–phenylalanine 97, aspartate 147, glutamine 190, and glycine 216. The segment at glycine 247 to aspartate 253 is RNA binding. Catalysis depends on aspartate 266, which acts as the Nucleophile. Positions threonine 271 to arginine 275 are RNA binding; important for wobble base 34 recognition. Zn(2+) is bound by residues cysteine 304, cysteine 306, cysteine 309, and histidine 335.

Belongs to the queuine tRNA-ribosyltransferase family. As to quaternary structure, homodimer. Within each dimer, one monomer is responsible for RNA recognition and catalysis, while the other monomer binds to the replacement base PreQ1. The cofactor is Zn(2+).

It carries out the reaction 7-aminomethyl-7-carbaguanine + guanosine(34) in tRNA = 7-aminomethyl-7-carbaguanosine(34) in tRNA + guanine. The protein operates within tRNA modification; tRNA-queuosine biosynthesis. Functionally, catalyzes the base-exchange of a guanine (G) residue with the queuine precursor 7-aminomethyl-7-deazaguanine (PreQ1) at position 34 (anticodon wobble position) in tRNAs with GU(N) anticodons (tRNA-Asp, -Asn, -His and -Tyr). Catalysis occurs through a double-displacement mechanism. The nucleophile active site attacks the C1' of nucleotide 34 to detach the guanine base from the RNA, forming a covalent enzyme-RNA intermediate. The proton acceptor active site deprotonates the incoming PreQ1, allowing a nucleophilic attack on the C1' of the ribose to form the product. After dissociation, two additional enzymatic reactions on the tRNA convert PreQ1 to queuine (Q), resulting in the hypermodified nucleoside queuosine (7-(((4,5-cis-dihydroxy-2-cyclopenten-1-yl)amino)methyl)-7-deazaguanosine). The protein is Queuine tRNA-ribosyltransferase of Granulibacter bethesdensis (strain ATCC BAA-1260 / CGDNIH1).